The sequence spans 288 residues: Polyamine aminopropyltransferase (288 aa).

The 230-residue stretch at 9–238 (ETLHDQFGQY…GIMTFAWATD (230 aa)) folds into the PABS domain. Residue Gln33 participates in S-methyl-5'-thioadenosine binding. Spermidine contacts are provided by His64 and Asp88. Residues Glu108 and 140 to 141 (DG) contribute to the S-methyl-5'-thioadenosine site. The active-site Proton acceptor is the Asp158. Spermidine is bound at residue 158-161 (DCTD). Pro165 lines the S-methyl-5'-thioadenosine pocket.

It belongs to the spermidine/spermine synthase family. Homodimer or homotetramer.

It is found in the cytoplasm. The catalysed reaction is S-adenosyl 3-(methylsulfanyl)propylamine + putrescine = S-methyl-5'-thioadenosine + spermidine + H(+). The protein operates within amine and polyamine biosynthesis; spermidine biosynthesis; spermidine from putrescine: step 1/1. Its function is as follows. Catalyzes the irreversible transfer of a propylamine group from the amino donor S-adenosylmethioninamine (decarboxy-AdoMet) to putrescine (1,4-diaminobutane) to yield spermidine. This chain is Polyamine aminopropyltransferase, found in Escherichia coli O81 (strain ED1a).